A 357-amino-acid chain; its full sequence is 3-isopropylmalate dehydrogenase (357 aa).

76–89 (GPQWDTIDPALRPE) contacts NAD(+). Residues Arg-96, Arg-106, Arg-134, and Asp-224 each coordinate substrate. Mg(2+) is bound by residues Asp-224, Asp-248, and Asp-252. 282–294 (GSAPDIAGQGVAN) contributes to the NAD(+) binding site.

The protein belongs to the isocitrate and isopropylmalate dehydrogenases family. LeuB type 1 subfamily. As to quaternary structure, homodimer. The cofactor is Mg(2+). Requires Mn(2+) as cofactor.

It is found in the cytoplasm. It catalyses the reaction (2R,3S)-3-isopropylmalate + NAD(+) = 4-methyl-2-oxopentanoate + CO2 + NADH. It functions in the pathway amino-acid biosynthesis; L-leucine biosynthesis; L-leucine from 3-methyl-2-oxobutanoate: step 3/4. In terms of biological role, catalyzes the oxidation of 3-carboxy-2-hydroxy-4-methylpentanoate (3-isopropylmalate) to 3-carboxy-4-methyl-2-oxopentanoate. The product decarboxylates to 4-methyl-2 oxopentanoate. This chain is 3-isopropylmalate dehydrogenase, found in Xylella fastidiosa (strain 9a5c).